Here is a 208-residue protein sequence, read N- to C-terminus: Ribosomal RNA small subunit methyltransferase G (208 aa).

Residues Gly-78, Phe-83, 101–103, 129–130, and Arg-142 each bind S-adenosyl-L-methionine; these read ERS and IE.

It belongs to the methyltransferase superfamily. RNA methyltransferase RsmG family.

It localises to the cytoplasm. Specifically methylates the N7 position of a guanine in 16S rRNA. The sequence is that of Ribosomal RNA small subunit methyltransferase G from Borreliella burgdorferi (strain ZS7) (Borrelia burgdorferi).